The chain runs to 491 residues: UDP-N-acetylmuramoyl-L-alanyl-D-glutamate--2,6-diaminopimelate ligase (491 aa).

S30 contacts UDP-N-acetyl-alpha-D-muramoyl-L-alanyl-D-glutamate. Position 108 to 114 (108 to 114) interacts with ATP; sequence GTNGKTT. UDP-N-acetyl-alpha-D-muramoyl-L-alanyl-D-glutamate contacts are provided by residues N149, 150–151, S177, Q183, and R185; that span reads TT. An N6-carboxylysine modification is found at K217. Meso-2,6-diaminopimelate-binding positions include R383, 407–410, G458, and E462; that span reads DNPR. Residues 407–410 carry the Meso-diaminopimelate recognition motif motif; sequence DNPR.

Belongs to the MurCDEF family. MurE subfamily. The cofactor is Mg(2+). Carboxylation is probably crucial for Mg(2+) binding and, consequently, for the gamma-phosphate positioning of ATP.

The protein resides in the cytoplasm. The enzyme catalyses UDP-N-acetyl-alpha-D-muramoyl-L-alanyl-D-glutamate + meso-2,6-diaminopimelate + ATP = UDP-N-acetyl-alpha-D-muramoyl-L-alanyl-gamma-D-glutamyl-meso-2,6-diaminopimelate + ADP + phosphate + H(+). It participates in cell wall biogenesis; peptidoglycan biosynthesis. Catalyzes the addition of meso-diaminopimelic acid to the nucleotide precursor UDP-N-acetylmuramoyl-L-alanyl-D-glutamate (UMAG) in the biosynthesis of bacterial cell-wall peptidoglycan. The polypeptide is UDP-N-acetylmuramoyl-L-alanyl-D-glutamate--2,6-diaminopimelate ligase (Listeria innocua serovar 6a (strain ATCC BAA-680 / CLIP 11262)).